Consider the following 55-residue polypeptide: Large ribosomal subunit protein bL33 (55 aa).

Belongs to the bacterial ribosomal protein bL33 family.

In Azorhizobium caulinodans (strain ATCC 43989 / DSM 5975 / JCM 20966 / LMG 6465 / NBRC 14845 / NCIMB 13405 / ORS 571), this protein is Large ribosomal subunit protein bL33.